Reading from the N-terminus, the 127-residue chain is Small ribosomal subunit protein uS12 (127 aa).

D89 is modified (3-methylthioaspartic acid). Positions 101-127 are disordered; it reads ALDTSGVAGRTQRRSKYGAKRPKEAKK. Residues 111 to 127 show a composition bias toward basic residues; it reads TQRRSKYGAKRPKEAKK.

Belongs to the universal ribosomal protein uS12 family. As to quaternary structure, part of the 30S ribosomal subunit. Contacts proteins S8 and S17. May interact with IF1 in the 30S initiation complex.

Functionally, with S4 and S5 plays an important role in translational accuracy. In terms of biological role, interacts with and stabilizes bases of the 16S rRNA that are involved in tRNA selection in the A site and with the mRNA backbone. Located at the interface of the 30S and 50S subunits, it traverses the body of the 30S subunit contacting proteins on the other side and probably holding the rRNA structure together. The combined cluster of proteins S8, S12 and S17 appears to hold together the shoulder and platform of the 30S subunit. The protein is Small ribosomal subunit protein uS12 of Flavobacterium johnsoniae (strain ATCC 17061 / DSM 2064 / JCM 8514 / BCRC 14874 / CCUG 350202 / NBRC 14942 / NCIMB 11054 / UW101) (Cytophaga johnsonae).